An 874-amino-acid polypeptide reads, in one-letter code: Protein translocase subunit SecA (874 aa).

Residues glutamine 87, 105–109, and aspartate 512 contribute to the ATP site; that span reads GEGKT. Zn(2+) is bound by residues cysteine 859, cysteine 861, cysteine 870, and histidine 871.

This sequence belongs to the SecA family. As to quaternary structure, monomer and homodimer. Part of the essential Sec protein translocation apparatus which comprises SecA, SecYEG and auxiliary proteins SecDF-YajC and YidC. Zn(2+) serves as cofactor.

Its subcellular location is the cell inner membrane. The protein localises to the cytoplasm. It carries out the reaction ATP + H2O + cellular proteinSide 1 = ADP + phosphate + cellular proteinSide 2.. In terms of biological role, part of the Sec protein translocase complex. Interacts with the SecYEG preprotein conducting channel. Has a central role in coupling the hydrolysis of ATP to the transfer of proteins into and across the cell membrane, serving both as a receptor for the preprotein-SecB complex and as an ATP-driven molecular motor driving the stepwise translocation of polypeptide chains across the membrane. The chain is Protein translocase subunit SecA from Buchnera aphidicola subsp. Schizaphis graminum (strain Sg).